The primary structure comprises 809 residues: WD repeat protein iqw1 (809 aa).

5 WD repeats span residues 43-82 (GHTG…KPRH), 87-128 (GHVQ…EGGM), 141-180 (CALD…VCNQ), 193-233 (PYRI…KSFR), and 241-295 (SPEK…LFHV). The interval 599 to 644 (SMYTGHSDLNDDDDDYQDEESYSYASDDDDESDEDSDEGPTLLSLR) is disordered. Residues 608 to 636 (NDDDDDYQDEESYSYASDDDDESDEDSDE) are compositionally biased toward acidic residues. 2 WD repeats span residues 668–708 (CNVE…ILAI) and 711–750 (GDSE…PSGC).

Interacts with ddb1.

It localises to the cytoplasm. Ligand-dependent coactivator of nuclear receptors that may function as a substrate receptor for CUL4-DDB1 E3 ubiquitin-protein ligase complex. This is WD repeat protein iqw1 (iqw1) from Schizosaccharomyces pombe (strain 972 / ATCC 24843) (Fission yeast).